Reading from the N-terminus, the 470-residue chain is ATP synthase subunit beta (470 aa).

158-165 contributes to the ATP binding site; the sequence is GGAGVGKT.

The protein belongs to the ATPase alpha/beta chains family. In terms of assembly, F-type ATPases have 2 components, CF(1) - the catalytic core - and CF(0) - the membrane proton channel. CF(1) has five subunits: alpha(3), beta(3), gamma(1), delta(1), epsilon(1). CF(0) has three main subunits: a(1), b(2) and c(9-12). The alpha and beta chains form an alternating ring which encloses part of the gamma chain. CF(1) is attached to CF(0) by a central stalk formed by the gamma and epsilon chains, while a peripheral stalk is formed by the delta and b chains.

The protein localises to the cell membrane. It carries out the reaction ATP + H2O + 4 H(+)(in) = ADP + phosphate + 5 H(+)(out). Produces ATP from ADP in the presence of a proton gradient across the membrane. The catalytic sites are hosted primarily by the beta subunits. The sequence is that of ATP synthase subunit beta from Halalkalibacterium halodurans (strain ATCC BAA-125 / DSM 18197 / FERM 7344 / JCM 9153 / C-125) (Bacillus halodurans).